The following is a 449-amino-acid chain: Ribosomal protein uS12 methylthiotransferase RimO (449 aa).

Positions 15–125 (PRISFVSLGC…VLAAVHEAVP (111 aa)) constitute an MTTase N-terminal domain. [4Fe-4S] cluster is bound by residues C24, C60, C89, C156, C160, and C163. A Radical SAM core domain is found at 142 to 379 (LTPRHYAYLK…MRTQQKVSAR (238 aa)). In terms of domain architecture, TRAM spans 382–448 (KRKVGTRQSV…PYDLSGTAVG (67 aa)).

This sequence belongs to the methylthiotransferase family. RimO subfamily. [4Fe-4S] cluster serves as cofactor.

It localises to the cytoplasm. The catalysed reaction is L-aspartate(89)-[ribosomal protein uS12]-hydrogen + (sulfur carrier)-SH + AH2 + 2 S-adenosyl-L-methionine = 3-methylsulfanyl-L-aspartate(89)-[ribosomal protein uS12]-hydrogen + (sulfur carrier)-H + 5'-deoxyadenosine + L-methionine + A + S-adenosyl-L-homocysteine + 2 H(+). Catalyzes the methylthiolation of an aspartic acid residue of ribosomal protein uS12. The chain is Ribosomal protein uS12 methylthiotransferase RimO from Xanthobacter autotrophicus (strain ATCC BAA-1158 / Py2).